Reading from the N-terminus, the 490-residue chain is Probable cytosol aminopeptidase (490 aa).

2 residues coordinate Mn(2+): Lys257 and Asp262. Lys269 is an active-site residue. 3 residues coordinate Mn(2+): Asp281, Asp341, and Glu343. Arg345 is a catalytic residue.

This sequence belongs to the peptidase M17 family. Mn(2+) is required as a cofactor.

Its subcellular location is the cytoplasm. The enzyme catalyses Release of an N-terminal amino acid, Xaa-|-Yaa-, in which Xaa is preferably Leu, but may be other amino acids including Pro although not Arg or Lys, and Yaa may be Pro. Amino acid amides and methyl esters are also readily hydrolyzed, but rates on arylamides are exceedingly low.. The catalysed reaction is Release of an N-terminal amino acid, preferentially leucine, but not glutamic or aspartic acids.. In terms of biological role, presumably involved in the processing and regular turnover of intracellular proteins. Catalyzes the removal of unsubstituted N-terminal amino acids from various peptides. In Prochlorococcus marinus (strain MIT 9312), this protein is Probable cytosol aminopeptidase.